Reading from the N-terminus, the 101-residue chain is Gamma-secretase subunit PEN-2 (101 aa).

Residues M1–R17 lie on the Cytoplasmic side of the membrane. The segment at residues Y18–W36 is an intramembrane region (helical). The Cytoplasmic segment spans residues F37–V57. Residues K58 to F78 form a helical membrane-spanning segment. Residues Q79 to A101 lie on the Lumenal side of the membrane.

This sequence belongs to the PEN-2 family. In terms of assembly, the functional gamma-secretase complex is composed of at least four polypeptides: a presenilin homodimer (psen1 or psen2), nicastrin (ncstn), aph1 (aph1a or aph1b) and psenen.

The protein localises to the endoplasmic reticulum membrane. The protein resides in the golgi apparatus. It localises to the golgi stack membrane. It is found in the cell membrane. Its subcellular location is the membrane. Its function is as follows. Essential subunit of the gamma-secretase complex, an endoprotease complex that catalyzes the intramembrane cleavage of integral membrane proteins such as Notch receptors and APP (amyloid-beta precursor protein). The gamma-secretase complex plays a role in Notch and Wnt signaling cascades and regulation of downstream processes via its role in processing key regulatory proteins. This Danio rerio (Zebrafish) protein is Gamma-secretase subunit PEN-2 (psenen).